The sequence spans 175 residues: Cytochrome c homolog (175 aa).

At 1–8 (MTGKELNK) the chain is on the cytoplasmic side. The helical; Signal-anchor transmembrane segment at 9-29 (IVAAILFASLIAMIVRFVANI) threads the bilayer. The Periplasmic segment spans residues 30 to 175 (LYKPNLQVLN…LFLKNYVHDK (146 aa)). Cys84, Cys87, His88, and Met150 together coordinate heme c.

It belongs to the cytochrome c family. Binds 1 heme c group covalently per subunit.

The protein resides in the cell membrane. May be involved in electron transfer from bc1 complex to aa3. The sequence is that of Cytochrome c homolog (cycM) from Rickettsia typhi (strain ATCC VR-144 / Wilmington).